The primary structure comprises 458 residues: UDP-N-acetylmuramoylalanine--D-glutamate ligase (458 aa).

Residue 124–130 participates in ATP binding; it reads GSDGKTT.

The protein belongs to the MurCDEF family.

The protein localises to the cytoplasm. It catalyses the reaction UDP-N-acetyl-alpha-D-muramoyl-L-alanine + D-glutamate + ATP = UDP-N-acetyl-alpha-D-muramoyl-L-alanyl-D-glutamate + ADP + phosphate + H(+). The protein operates within cell wall biogenesis; peptidoglycan biosynthesis. In terms of biological role, cell wall formation. Catalyzes the addition of glutamate to the nucleotide precursor UDP-N-acetylmuramoyl-L-alanine (UMA). This is UDP-N-acetylmuramoylalanine--D-glutamate ligase from Clostridium botulinum (strain Kyoto / Type A2).